A 320-amino-acid polypeptide reads, in one-letter code: ATP-dependent 6-phosphofructokinase (320 aa).

An ATP-binding site is contributed by Gly-12. Residues 22-26 (RGVVR) and 55-60 (RYSVSD) each bind ADP. ATP contacts are provided by residues 73–74 (RF) and 103–106 (GDGS). Asp-104 is a Mg(2+) binding site. Position 126-128 (126-128 (TID)) interacts with substrate. Asp-128 (proton acceptor) is an active-site residue. Arg-155 serves as a coordination point for ADP. Residues Arg-163 and 170–172 (MGR) each bind substrate. Residues 186 to 188 (GCE), Lys-212, and 214 to 216 (KKH) each bind ADP. Substrate-binding positions include Glu-223, Arg-244, and 250–253 (HIQR).

It belongs to the phosphofructokinase type A (PFKA) family. ATP-dependent PFK group I subfamily. Prokaryotic clade 'B1' sub-subfamily. In terms of assembly, homotetramer. Mg(2+) serves as cofactor.

Its subcellular location is the cytoplasm. It catalyses the reaction beta-D-fructose 6-phosphate + ATP = beta-D-fructose 1,6-bisphosphate + ADP + H(+). Its pathway is carbohydrate degradation; glycolysis; D-glyceraldehyde 3-phosphate and glycerone phosphate from D-glucose: step 3/4. With respect to regulation, allosterically activated by ADP and other diphosphonucleosides, and allosterically inhibited by phosphoenolpyruvate. Catalyzes the phosphorylation of D-fructose 6-phosphate to fructose 1,6-bisphosphate by ATP, the first committing step of glycolysis. This chain is ATP-dependent 6-phosphofructokinase, found in Enterobacter cloacae.